Here is a 467-residue protein sequence, read N- to C-terminus: Signal transduction histidine-protein kinase BaeS (467 aa).

Residues 1 to 11 (MKFWRPGITGK) lie on the Cytoplasmic side of the membrane. Residues 12–32 (LFLAIFATCIVLLISMHWAVR) traverse the membrane as a helical segment. Residues 33 to 167 (ISFERGFIDY…NFDKQQRQTS (135 aa)) are Periplasmic-facing. Residues 168–186 (WLIVALATLLAALATFLLA) form a helical membrane-spanning segment. Positions 187-239 (RGLLAPVKRLVDGTHKLAAGDFTTRVTPTSEDELGKLAQDFNQLASTLEKNQQ) constitute an HAMP domain. The Cytoplasmic portion of the chain corresponds to 187–467 (RGLLAPVKRL…PLERDLQREV (281 aa)). In terms of domain architecture, Histidine kinase spans 247-461 (DISHELRTPL…SITVELPLER (215 aa)). His-250 carries the post-translational modification Phosphohistidine; by autocatalysis.

Post-translationally, autophosphorylated.

It localises to the cell inner membrane. The enzyme catalyses ATP + protein L-histidine = ADP + protein N-phospho-L-histidine.. Functionally, member of the two-component regulatory system BaeS/BaeR which responds to envelope stress. Activates expression of periplasmic chaperone spy in response to spheroplast formation, indole and P pili protein PapG overexpression. Activates BaeR by phosphorylation which then activates the mdtABCD and probably the CRISPR-Cas casABCDE-ygbT-ygbF operons. In Escherichia coli (strain K12), this protein is Signal transduction histidine-protein kinase BaeS.